A 339-amino-acid chain; its full sequence is Annexin A2 (339 aa).

Position 2 is an N-acetylserine (Ser-2). Residues 2–24 (STVHEILSKLSLEGDHSLPPSAY) are S100A10-binding site. Tyr-24 carries the phosphotyrosine; by SRC modification. Phosphothreonine; by PKC is present on Thr-26. Annexin repeat units lie at residues 33-104 (FDAD…GLLK), 105-176 (TPSQ…ALAK), 189-261 (ELID…NLVQ), and 265-336 (NKQL…NLCG).

The protein belongs to the annexin family. Heterotetramer containing 2 light chains of S100A10/p11 and 2 heavy chains of ANXA2/p36.

It localises to the secreted. The protein localises to the extracellular space. The protein resides in the extracellular matrix. Its subcellular location is the basement membrane. Calcium-regulated membrane-binding protein whose affinity for calcium is greatly enhanced by anionic phospholipids. It binds two calcium ions with high affinity. This Gallus gallus (Chicken) protein is Annexin A2 (ANXA2).